Here is a 60-residue protein sequence, read N- to C-terminus: Three-finger toxin Mnn I (60 aa).

Intrachain disulfides connect C3-C22, C17-C39, C41-C52, and C53-C58.

This sequence belongs to the three-finger toxin family. Short-chain subfamily. Type I alpha-neurotoxin sub-subfamily. Expressed by the venom gland.

Its subcellular location is the secreted. In terms of biological role, binds to muscle nicotinic acetylcholine receptor (nAChR) and inhibit acetylcholine from binding to the receptor, thereby impairing neuromuscular transmission. The sequence is that of Three-finger toxin Mnn I from Micrurus nigrocinctus (Central American coral snake).